The following is a 722-amino-acid chain: Solute carrier organic anion transporter family member 4C1 (722 aa).

The interval 1-81 (MQGSKGIENP…PGSQLSELEE (81 aa)) is disordered. The Cytoplasmic portion of the chain corresponds to 1–101 (MQGSKGIENP…QCLQRCNTPQ (101 aa)). Residues Ser15 and Ser16 each carry the phosphoserine modification. A Phosphothreonine modification is found at Thr19. Ser24, Ser26, and Ser28 each carry phosphoserine. A compositionally biased stretch (polar residues) spans 25-46 (ASPSQVEVSAVASRNQNGGSQP). A helical membrane pass occupies residues 102–122 (GFLLHYCLLALTQGIVVNGLV). Over 123–141 (NISISTIEKRYEMKSSLTG) the chain is Extracellular. The helical transmembrane segment at 142–162 (LISSSYDISFCVLSLFVSFFG) threads the bilayer. At 163 to 168 (ERGHKP) the chain is on the cytoplasmic side. Residues 169–193 (RWLAFASFMIGLGALVFSLPHFFSG) traverse the membrane as a helical segment. Over 194 to 218 (RYELGSIFEDTCLTRNSTRCSSSTS) the chain is Extracellular. The helical transmembrane segment at 219–249 (LLSNYFYVFVLGQLLLGTGGTPLYTLGTAFI) threads the bilayer. Residues 250 to 269 (DDSVPTHKSSLYIGIGYSMS) are Cytoplasmic-facing. A helical membrane pass occupies residues 270–290 (ILGPAIGYVLGGQLLTMYIDI). Topologically, residues 291–306 (AMGQSSDLTEDDPRWL) are extracellular. A helical transmembrane segment spans residues 307 to 331 (GAWWIGFLLAWLFAWSLIMPFSCFP). Residues 332–376 (KHLPGTAKIQAGKTSQTHQNNSTSFQHTDENFGKSIKDFPTAVKN) lie on the Cytoplasmic side of the membrane. The chain crosses the membrane as a helical span at residues 377-398 (LMRNTVFICLVLSTTSEALITT). At 399–418 (GFATFLPKFIENQFGLTSSF) the chain is on the extracellular side. The chain crosses the membrane as a helical span at residues 419-442 (AATLGGAVLIPGAALGQILGGVLV). Topologically, residues 443–446 (SKFK) are cytoplasmic. Residues 447–470 (MKCKNTMKFALCTSGVALVLSFVF) traverse the membrane as a helical segment. The Extracellular portion of the chain corresponds to 471–578 (IYAKCENEPF…RTRCSNLPIF (108 aa)). Residues 494 to 549 (GNLTAPCNANCNCLRSYYYPLCGSDGIQYFSPCFAGCLNSVSNRKPKVYYNCSCIE) form the Kazal-like domain. 3 disulfide bridges follow: Cys500–Cys530, Cys506–Cys526, and Cys515–Cys547. The chain crosses the membrane as a helical span at residues 579–601 (LGIFFITVIFTFMAGTPITVSIL). Over 602-610 (RCVNHRHRS) the chain is Cytoplasmic. A helical membrane pass occupies residues 611–636 (LALGVQFMLLRLLGTIPGPIIFGVII). Residues 637–670 (DSTCVLWDVNECGIKGACWIYDNIKMAHMLVAIS) lie on the Extracellular side of the membrane. Residues 671–688 (VTCKVITIFFNGLAIVLY) form a helical membrane-spanning segment. The Cytoplasmic segment spans residues 689 to 722 (KPPPPGTEVSFQSQNVIVSTISVEEDLDKAENEG).

The protein belongs to the organo anion transporter (TC 2.A.60) family. As to expression, strongly expressed in initial segment of epididymis and seminal vesicles.

It is found in the basolateral cell membrane. The enzyme catalyses estrone 3-sulfate(out) = estrone 3-sulfate(in). It carries out the reaction L-thyroxine(out) = L-thyroxine(in). It catalyses the reaction 3,3',5-triiodo-L-thyronine(out) = 3,3',5-triiodo-L-thyronine(in). The catalysed reaction is chenodeoxycholate(out) = chenodeoxycholate(in). The enzyme catalyses glycocholate(out) = glycocholate(in). It carries out the reaction L-homoarginine(in) = L-homoarginine(out). It catalyses the reaction L-arginine(in) = L-arginine(out). The catalysed reaction is N(omega),N(omega)-dimethyl-L-arginine(out) = N(omega),N(omega)-dimethyl-L-arginine(in). In terms of biological role, mediates the transport of organic anions such as steroids (estrone 3-sulfate, chenodeoxycholate, glycocholate) and thyroid hormones (3,3',5-triiodo-L-thyronine (T3), L-thyroxine (T4)), in the kidney. Capable of transporting cAMP and pharmacological substances such as digoxin, ouabain and methotrexate. Transport is independent of sodium, chloride ion, and ATP. Transport activity is stimulated by an acidic extracellular environment due to increased substrate affinity to the transporter. The driving force for this transport activity is currently not known. The role of hydrogencarbonate (HCO3(-), bicarbonate) as the probable counteranion that exchanges for organic anions is still not well defined. Functions as an uptake transporter at the apical membrane, suggesting a role in renal reabsorption. Involved in the renal secretion of the uremic toxin ADMA (N(omega),N(omega)-dimethyl-L-arginine or asymmetrical dimethylarginine), which is associated to cardiovascular events and mortality, and the structurally related amino acids L-arginine and L-homoarginine (a cardioprotective biomarker). Can act bidirectionally, suggesting a dual protective role of this transport protein; exporting L-homoarginine after being synthesized in proximal tubule cells, and mediating uptake of ADMA from the blood into proximal tubule cells where it is degraded by the enzyme dimethylarginine dimethylaminohydrolase 1 (DDAH1). May be involved in sperm maturation by enabling directed movement of organic anions and compounds within or between cells. This ion-transporting process is important to maintain the strict epididymal homeostasis necessary for sperm maturation. May have a role in secretory functions since seminal vesicle epithelial cells are assumed to secrete proteins involved in decapacitation by modifying surface proteins to facilitate the acquisition of the ability to fertilize the egg. The polypeptide is Solute carrier organic anion transporter family member 4C1 (Mus musculus (Mouse)).